The sequence spans 411 residues: Lissencephaly-1 homolog (411 aa).

A LisH domain is found at 9 to 41; it reads QREELNQAIADYLGSNGYSSALEAFRKEADISG. Residues 56-83 adopt a coiled-coil conformation; sequence TSVIRLQKKVMELEAKLSEAEKEVIEGA. WD repeat units follow at residues 106–147, 149–187, 191–230, 233–272, 275–334, 337–376, and 379–411; these read GHRA…RSLK, HTSSVQDIAFDSQGKLLASCSADLSIKLWDFQQSYDCVK, GHDHNVSSVAFVPAGDYVLSASRDQTIKMWEVATGYCVKT, GHREWIRMVRVHMDGNIFASCSIDHSIRIWSINSRDCKAE, AHDH…CLFV, GHDNWVRELTFHPGGKYLVSASDDKTIRVWDLRNKRFMKT, and AHQHFCTSVDFHKKLPYVISGSVDNTVKVWECR.

Belongs to the WD repeat LIS1/nudF family.

It localises to the cytoplasm. It is found in the cytoskeleton. Its subcellular location is the microtubule organizing center. The protein resides in the centrosome. Positively regulates the activity of the minus-end directed microtubule motor protein dynein. May enhance dynein-mediated microtubule sliding by targeting dynein to the microtubule plus end. Required for several dynein- and microtubule-dependent processes. The polypeptide is Lissencephaly-1 homolog (Glossina morsitans morsitans (Savannah tsetse fly)).